The chain runs to 207 residues: Riboflavin synthase (207 aa).

2 Lumazine-binding repeats span residues 1 to 94 (MFTG…LGGH) and 95 to 191 (IVQG…INYL). 2,4-dihydroxypteridine-binding positions include 4-6 (GLV), 45-47 (CLT), 59-64 (DVSPET), 98-100 (GHV), Lys133, 142-144 (SLT), and 156-161 (NIIPHT).

As to quaternary structure, homotrimer.

The catalysed reaction is 2 6,7-dimethyl-8-(1-D-ribityl)lumazine + H(+) = 5-amino-6-(D-ribitylamino)uracil + riboflavin. Its pathway is cofactor biosynthesis; riboflavin biosynthesis; riboflavin from 2-hydroxy-3-oxobutyl phosphate and 5-amino-6-(D-ribitylamino)uracil: step 2/2. Functionally, catalyzes the dismutation of two molecules of 6,7-dimethyl-8-ribityllumazine, resulting in the formation of riboflavin and 5-amino-6-(D-ribitylamino)uracil. The protein is Riboflavin synthase (ribE) of Aquifex aeolicus (strain VF5).